Reading from the N-terminus, the 306-residue chain is MPEAGFQATNAFTECKFTCTSGKCLYLGSLVCNQQNDCGDNSDEENCLLVTEHPPPGIFNSELEFAQIIIIVVVVTVMVVVIVCLLNHYKVSTRSFINRPNQSRRREDGLPQEGCLWPSDSAAPRLGASEIMHAPRSRDRFTAPSFIQRDRFSRFQPTYPYVQHEIDLPPTISLSDGEEPPPYQGPCTLQLRDPEQQMELNRESVRAPPNRTIFDSDLIDIAMYSGGPCPPSSNSGISASTCSSNGRMEGPPPTYSEVMGHHPGASFLHHQRSNAHRGSRLQFQQNNAESTIVPIKGKDRKPGNLV.

Residues 1 to 64 (MPEAGFQATN…PPGIFNSELE (64 aa)) lie on the Lumenal side of the membrane. One can recognise an LDL-receptor class A domain in the interval 16-48 (KFTCTSGKCLYLGSLVCNQQNDCGDNSDEENCL). 2 disulfide bridges follow: cysteine 19/cysteine 38 and cysteine 32/cysteine 47. Residues 65 to 85 (FAQIIIIVVVVTVMVVVIVCL) traverse the membrane as a helical segment. Residues 86–306 (LNHYKVSTRS…GKDRKPGNLV (221 aa)) are Cytoplasmic-facing. Residues 180 to 183 (PPPY) carry the PPxY motif 1 motif. The short motif at 208-211 (PPNR) is the SMAD interaction motif (SIM) element. The short motif at 252–255 (PPTY) is the PPxY motif 2 element. The interval 286–306 (NNAESTIVPIKGKDRKPGNLV) is disordered. Residues 296-306 (KGKDRKPGNLV) show a composition bias toward basic and acidic residues.

The protein belongs to the PMEPA1 family. Interacts with PMEPA1. Interacts (via the SMAD interaction motif) with SMAD2 and SMAD3. Expressed in lymphocytes.

The protein localises to the early endosome membrane. Its function is as follows. Functions as a negative regulator of TGF-beta signaling and thereby probably plays a role in cell proliferation, differentiation, apoptosis, motility, extracellular matrix production and immunosuppression. In the canonical TGF-beta pathway, ZFYVE9/SARA recruits the intracellular signal transducer and transcriptional modulators SMAD2 and SMAD3 to the TGF-beta receptor. Phosphorylated by the receptor, SMAD2 and SMAD3 then form a heteromeric complex with SMAD4 that translocates to the nucleus to regulate transcription. Through interaction with SMAD2 and SMAD3, LDLRAD4 may compete with ZFYVE9 and SMAD4 and prevent propagation of the intracellular signal. The chain is Low-density lipoprotein receptor class A domain-containing protein 4 (LDLRAD4) from Homo sapiens (Human).